A 91-amino-acid chain; its full sequence is Probable Fe(2+)-trafficking protein (91 aa).

The protein belongs to the Fe(2+)-trafficking protein family.

Functionally, could be a mediator in iron transactions between iron acquisition and iron-requiring processes, such as synthesis and/or repair of Fe-S clusters in biosynthetic enzymes. This chain is Probable Fe(2+)-trafficking protein, found in Tolumonas auensis (strain DSM 9187 / NBRC 110442 / TA 4).